The chain runs to 230 residues: MRLVGLTGGIASGKSTISNLFKASGIPVVDADIVARNVVQKGTGGWKKIVEAFGNDVLLENGEIDRARLGQIVFSDPEKRQVLNRLLAPHISSGIFWEILKLWIKGCKVIVLDIPLLFETKMDQWTHPVIVVWVNEATQIERLMSRDGCSEEQARNRINAQLALDWKKSQADIVIDNSGTLDETKEKFQEVLRNVSEPLTWKERLRSRDGLFSVVVCTAVGVLLAQKNLL.

The 204-residue stretch at leucine 3–arginine 206 folds into the DPCK domain. An ATP-binding site is contributed by glycine 8–serine 15.

The protein belongs to the CoaE family.

It catalyses the reaction 3'-dephospho-CoA + ATP = ADP + CoA + H(+). The protein operates within cofactor biosynthesis; coenzyme A biosynthesis; CoA from (R)-pantothenate: step 5/5. Functionally, catalyzes the phosphorylation of the 3'-hydroxyl group of dephosphocoenzyme A to form coenzyme A. In Oryza sativa subsp. japonica (Rice), this protein is Dephospho-CoA kinase.